The following is a 179-amino-acid chain: MGIFDLAKKITHSREYTKSIDEIFVGELINFMYKNGAVLTEINSPTESSHSLTFKFVNHPVLHILRITVDRKIEGMASKILGSQSVLTFEAVIKNDLVEPNDVLVMYQTDFKNMFKIPIFGKVKINHDLNYIIATTTYIEDLGKYIKSDRIEKEALREELEKILNTLVKHLEPLKKKFD.

Residues isoleucine 139–glutamate 172 are a coiled coil.

This is an uncharacterized protein from Methanocaldococcus jannaschii (strain ATCC 43067 / DSM 2661 / JAL-1 / JCM 10045 / NBRC 100440) (Methanococcus jannaschii).